The primary structure comprises 800 residues: Phenylalanine--tRNA ligase beta subunit (800 aa).

Residues 39–154 enclose the tRNA-binding domain; sequence TKDIKNLVVG…EAQVPGTDAL (116 aa). The 76-residue stretch at 408–483 folds into the B5 domain; the sequence is AFITPIDITA…RIYGYDDIPS (76 aa). Positions 461, 467, 470, and 471 each coordinate Mg(2+). Residues 708 to 800 enclose the FDX-ACB domain; sequence PRFPGMSRDI…ALIEQGAVIR (93 aa).

The protein belongs to the phenylalanyl-tRNA synthetase beta subunit family. Type 1 subfamily. As to quaternary structure, tetramer of two alpha and two beta subunits. The cofactor is Mg(2+).

Its subcellular location is the cytoplasm. The catalysed reaction is tRNA(Phe) + L-phenylalanine + ATP = L-phenylalanyl-tRNA(Phe) + AMP + diphosphate + H(+). The sequence is that of Phenylalanine--tRNA ligase beta subunit from Staphylococcus aureus (strain USA300).